Consider the following 344-residue polypeptide: Glyceraldehyde-3-phosphate dehydrogenase (344 aa).

NAD(+) contacts are provided by residues 11–12 (TI) and G110. Position 139 to 141 (139 to 141 (SCN)) interacts with D-glyceraldehyde 3-phosphate. C140 (nucleophile) is an active-site residue. R169 contributes to the NAD(+) binding site. A D-glyceraldehyde 3-phosphate-binding site is contributed by 195 to 196 (HG). Q302 serves as a coordination point for NAD(+).

This sequence belongs to the glyceraldehyde-3-phosphate dehydrogenase family. In terms of assembly, homotetramer.

The protein localises to the cytoplasm. The enzyme catalyses D-glyceraldehyde 3-phosphate + phosphate + NADP(+) = (2R)-3-phospho-glyceroyl phosphate + NADPH + H(+). It catalyses the reaction D-glyceraldehyde 3-phosphate + phosphate + NAD(+) = (2R)-3-phospho-glyceroyl phosphate + NADH + H(+). The protein operates within carbohydrate degradation; glycolysis; pyruvate from D-glyceraldehyde 3-phosphate: step 1/5. The chain is Glyceraldehyde-3-phosphate dehydrogenase from Pyrobaculum calidifontis (strain DSM 21063 / JCM 11548 / VA1).